Consider the following 185-residue polypeptide: uncharacterized protein (185 aa).

Residues 9 to 169 (VILELAKESD…NGREDDKPLL (161 aa)) form the N-acetyltransferase domain.

This is an uncharacterized protein from Bacillus subtilis (strain 168).